Reading from the N-terminus, the 267-residue chain is Putative F-box protein At1g61060 (267 aa).

The 49-residue stretch at 15–63 folds into the F-box domain; the sequence is DYFDAIHVDLFTAKILSKLPVKSIAQCRCVSKLWSSQIRRPYYNMLFPI.

The chain is Putative F-box protein At1g61060 from Arabidopsis thaliana (Mouse-ear cress).